A 62-amino-acid chain; its full sequence is Large ribosomal subunit protein bL32 (62 aa).

A compositionally biased stretch (basic residues) spans 1–19; it reads MAVPKRKTSKTRRDKRRAS. The disordered stretch occupies residues 1 to 20; the sequence is MAVPKRKTSKTRRDKRRASS.

This sequence belongs to the bacterial ribosomal protein bL32 family.

The chain is Large ribosomal subunit protein bL32 from Finegoldia magna (strain ATCC 29328 / DSM 20472 / WAL 2508) (Peptostreptococcus magnus).